Consider the following 89-residue polypeptide: UPF0145 protein MJ1170 (89 aa).

The protein belongs to the UPF0145 family. Highly divergent.

The chain is UPF0145 protein MJ1170 from Methanocaldococcus jannaschii (strain ATCC 43067 / DSM 2661 / JAL-1 / JCM 10045 / NBRC 100440) (Methanococcus jannaschii).